A 141-amino-acid chain; its full sequence is Mitochondrial import inner membrane translocase subunit tim16 (141 aa).

Residues 59 to 117 (EACKILNVNKPADGTAANMEEVMERFKRLFDANDPEKGGSFYLQSKVVRARERLEAEIK) form a J-like region. A disordered region spans residues 119-141 (KMEEKQAEEEVKEGWNPKIYKDR).

The protein belongs to the TIM16/PAM16 family. As to quaternary structure, heterodimer with tim14/pam18. Component of the PAM complex, at least composed of hsp70-5/ssc1, grpe/mge1, tim44, un-4/pam16, pam17 and tim14/pam18.

The protein resides in the mitochondrion inner membrane. Functionally, essential component of the PAM complex, a complex required for the translocation of transit peptide-containing proteins from the inner membrane into the mitochondrial matrix in an ATP-dependent manner. In the complex, it is required to regulate activity of mtHSP70 (hsp70-5) via its interaction with tim14/pam18. May act by positioning tim14/pam18 in juxtaposition to mtHSP70 at the translocon to maximize ATPase stimulation. The sequence is that of Mitochondrial import inner membrane translocase subunit tim16 (un-4) from Neurospora crassa (strain ATCC 24698 / 74-OR23-1A / CBS 708.71 / DSM 1257 / FGSC 987).